The following is a 180-amino-acid chain: Shikimate kinase (180 aa).

19-24 contributes to the ATP binding site; the sequence is GAGKTT. Residue Thr23 participates in Mg(2+) binding. Residues Asp41, Arg65, and Gly87 each coordinate substrate. Arg125 lines the ATP pocket. A substrate-binding site is contributed by Arg144.

Belongs to the shikimate kinase family. Monomer. Mg(2+) is required as a cofactor.

It localises to the cytoplasm. The enzyme catalyses shikimate + ATP = 3-phosphoshikimate + ADP + H(+). It participates in metabolic intermediate biosynthesis; chorismate biosynthesis; chorismate from D-erythrose 4-phosphate and phosphoenolpyruvate: step 5/7. Catalyzes the specific phosphorylation of the 3-hydroxyl group of shikimic acid using ATP as a cosubstrate. The sequence is that of Shikimate kinase from Acinetobacter baumannii (strain SDF).